We begin with the raw amino-acid sequence, 811 residues long: Probable inorganic carbon transporter subunit DabA (811 aa).

Zn(2+) is bound by residues cysteine 336, aspartate 338, histidine 498, and cysteine 513.

Belongs to the inorganic carbon transporter (TC 9.A.2) DabA family. In terms of assembly, forms a complex with DabB. Zn(2+) serves as cofactor.

The protein localises to the cell inner membrane. Its function is as follows. Part of an energy-coupled inorganic carbon pump. The protein is Probable inorganic carbon transporter subunit DabA of Rhodospirillum centenum (strain ATCC 51521 / SW).